A 1396-amino-acid chain; its full sequence is Sterol 3-beta-glucosyltransferase (1396 aa).

Positions M1–L16 are enriched in basic and acidic residues. Disordered regions lie at residues M1 to Q21, D40 to M64, A83 to P196, and E209 to Q232. Positions E94–F107 are enriched in basic and acidic residues. Residues R186–P196 show a composition bias toward low complexity. One can recognise a GRAM 1 domain in the interval R238 to T273. The PH domain maps to R289 to F388. 2 disordered regions span residues G460–S532 and T571–D627. Composition is skewed to polar residues over residues G484–S532 and T571–R584. Residues R588–L602 show a composition bias toward basic and acidic residues. Residues E717 to K783 enclose the GRAM 2 domain. Positions 905, 906, 908, 1208, 1210, 1223, 1227, 1228, 1247, and 1248 each coordinate UDP-alpha-D-glucose. Over residues S1324–Q1343 the composition is skewed to low complexity. Positions S1324–N1346 are disordered.

It belongs to the glycosyltransferase 28 family.

Its subcellular location is the cytoplasm. The protein localises to the preautophagosomal structure membrane. The enzyme catalyses a sterol + UDP-alpha-D-glucose = a sterol 3-beta-D-glucoside + UDP + H(+). The catalysed reaction is ergosterol + UDP-alpha-D-glucose = ergosteryl 3-beta-D-glucoside + UDP + H(+). Its function is as follows. Sterol glycosyltransferase responsible for the glycosylation of ergosterol to form ergosterol-glucoside. This Emericella nidulans (strain FGSC A4 / ATCC 38163 / CBS 112.46 / NRRL 194 / M139) (Aspergillus nidulans) protein is Sterol 3-beta-glucosyltransferase.